Consider the following 444-residue polypeptide: ATP-dependent protease ATPase subunit HslU (444 aa).

ATP contacts are provided by residues Ile-18 and 60 to 65 (GVGKTE). The tract at residues 141 to 161 (DAWGNNEEGNNDSGTRQSFRK) is disordered. Polar residues predominate over residues 147 to 157 (EEGNNDSGTRQ). The ATP site is built by Asp-257, Glu-322, and Arg-394.

This sequence belongs to the ClpX chaperone family. HslU subfamily. A double ring-shaped homohexamer of HslV is capped on each side by a ring-shaped HslU homohexamer. The assembly of the HslU/HslV complex is dependent on binding of ATP.

Its subcellular location is the cytoplasm. Functionally, ATPase subunit of a proteasome-like degradation complex; this subunit has chaperone activity. The binding of ATP and its subsequent hydrolysis by HslU are essential for unfolding of protein substrates subsequently hydrolyzed by HslV. HslU recognizes the N-terminal part of its protein substrates and unfolds these before they are guided to HslV for hydrolysis. This is ATP-dependent protease ATPase subunit HslU from Aliivibrio fischeri (strain ATCC 700601 / ES114) (Vibrio fischeri).